The following is a 161-amino-acid chain: Lectin-like protein EP153R (161 aa).

Topologically, residues 1-30 (MFSNKKYIGLIDKYCEKKILDDSSTIKICY) are cytoplasmic. A helical transmembrane segment spans residues 31–51 (ILIGILIGTNMITLIYNFIFW). Over 52–161 (ENYITCNQKD…HVSLLYICSK (110 aa)) the chain is Extracellular. Residues Cys66 and Cys77 are joined by a disulfide bond. The lectin-like stretch occupies residues 66–160 (CPKDWVGYNN…KHVSLLYICS (95 aa)). 7 N-linked (GlcNAc...) asparagine; by host glycosylation sites follow: Asn89, Asn98, Asn104, Asn110, Asn116, Asn130, and Asn136. Cys94 and Cys159 form a disulfide bridge.

The protein belongs to the asfivirus lectin-like protein family. As to quaternary structure, homodimer.

It localises to the host endoplasmic reticulum membrane. Down-regulates MHC-I expression by impairing the appropriate configuration or presentation into the plasma membrane of the latter. Participates in viral hemadsorption, which may help viral spread. Reduces the transactivating activity of host TP53, thus inhibiting apoptosis. Non-essential for virus growth in swine macrophage cell cultures. The chain is Lectin-like protein EP153R from African swine fever virus (isolate Tick/Malawi/Lil 20-1/1983) (ASFV).